The primary structure comprises 629 residues: Ionotropic receptor 75a (629 aa).

Residues M1 to P335 lie on the Extracellular side of the membrane. N61, N112, N126, N144, N166, and N232 each carry an N-linked (GlcNAc...) asparagine glycan. The helical transmembrane segment at L336–F356 threads the bilayer. Residues Y357–S374 lie on the Cytoplasmic side of the membrane. Residues L375–P395 form a helical membrane-spanning segment. Topologically, residues R396–L402 are extracellular. The chain crosses the membrane as a helical span at residues I403–V423. Residues S424–Y592 lie on the Cytoplasmic side of the membrane. A helical membrane pass occupies residues V593 to V613. Topologically, residues E614 to P629 are extracellular.

It belongs to the glutamate-gated ion channel (TC 1.A.10.1) family. In terms of tissue distribution, expressed in neurons in the antennal coeloconic 2 (ac2) sensillum class of sensory hairs (at protein level).

It localises to the cell membrane. It is found in the cell projection. Its subcellular location is the dendrite. Olfactory receptor for propionic, butyric and 2-oxopentanoic acids. In Drosophila sechellia (Fruit fly), this protein is Ionotropic receptor 75a.